The following is a 512-amino-acid chain: 2-isopropylmalate synthase (512 aa).

In terms of domain architecture, Pyruvate carboxyltransferase spans 5–267 (VVIFDTTLRD…ETSINKSEIY (263 aa)). Residues aspartate 14, histidine 202, histidine 204, and asparagine 238 each coordinate Mn(2+). Residues 391 to 512 (SLEYLHITSG…LPKAKTERAV (122 aa)) form a regulatory domain region.

It belongs to the alpha-IPM synthase/homocitrate synthase family. LeuA type 1 subfamily. In terms of assembly, homodimer. The cofactor is Mn(2+).

Its subcellular location is the cytoplasm. The catalysed reaction is 3-methyl-2-oxobutanoate + acetyl-CoA + H2O = (2S)-2-isopropylmalate + CoA + H(+). It functions in the pathway amino-acid biosynthesis; L-leucine biosynthesis; L-leucine from 3-methyl-2-oxobutanoate: step 1/4. Functionally, catalyzes the condensation of the acetyl group of acetyl-CoA with 3-methyl-2-oxobutanoate (2-ketoisovalerate) to form 3-carboxy-3-hydroxy-4-methylpentanoate (2-isopropylmalate). The chain is 2-isopropylmalate synthase from Heliobacterium modesticaldum (strain ATCC 51547 / Ice1).